We begin with the raw amino-acid sequence, 574 residues long: MSVQENTLPQQLWPWIFRSQKDLAKSALSGAPGGPAGYLRRASVAQLTQELGTAFFQQQQLPAAMADTFLEHLCLLDIDSQPVAARSTSIIATIGPASRSVDRLKEMIKAGMNIARLNFSHGSHEYHAESIANIREATESFATSPLSYRPVAIALDTKGPEIRTGVLQGGPESEVEIVKGSQVLVTVDPKFQTRGDAKTVWVDYHNITRVVAVGGRIYIDDGLISLVVQKIGPEGLVTEVEHGGILGSRKGVNLPNTEVDLPGLSEQDLLDLRFGVQHNVDIIFASFVRKASDVLAVRDALGPEGQNIKIISKIENHEGVKKFDEILEVSDGIMVARGDLGIEIPAEKVFLAQKMMIGRCNLAGKPVVCATQMLESMITKARPTRAETSDVANAVLDGADCIMLSGETAKGSFPVEAVMMQHAIAREAEAAVYHRQLFEELRRAAPLSRDPTEVTAIGAVEASFKCCAAAIIVLTKTGRSAQLLSQYRPRAAVIAVTRSAQAARQVHLSRGVFPLLYREPPEAIWADDVDRRVQFGIESGKLRGFLRVGDLVIVVTGWRPGSGYTNIMRVLSVS.

Residues Ser-2, Ser-19, Ser-26, and Ser-43 each carry the phosphoserine modification. A substrate-binding site is contributed by Arg-116. The K(+) site is built by Asn-118, Ser-120, Asp-156, and Thr-157. 118-121 (NFSH) contacts ATP. ATP is bound by residues Arg-163 and Lys-250. At Ser-292 the chain carries Phosphoserine. Lys-313 serves as a coordination point for substrate. Glu-315 lines the Mn(2+) pocket. The substrate site is built by Gly-338, Asp-339, and Thr-371. Position 339 (Asp-339) interacts with Mn(2+). Beta-D-fructose 1,6-bisphosphate is bound by residues 475 to 480 (TKTGRS), Trp-525, Arg-532, and 559 to 564 (RPGSGY).

This sequence belongs to the pyruvate kinase family. In terms of assembly, homotetramer. Mg(2+) serves as cofactor. Mn(2+) is required as a cofactor. Requires K(+) as cofactor.

The enzyme catalyses pyruvate + ATP = phosphoenolpyruvate + ADP + H(+). It participates in carbohydrate degradation; glycolysis; pyruvate from D-glyceraldehyde 3-phosphate: step 5/5. Allosterically activated by fructose 1,6-bisphosphate. In terms of biological role, pyruvate kinase that catalyzes the conversion of phosphoenolpyruvate to pyruvate with the synthesis of ATP, and which plays a key role in glycolysis. The chain is Pyruvate kinase PKLR (Pklr) from Rattus norvegicus (Rat).